The chain runs to 423 residues: G protein-activated inward rectifier potassium channel 2 (423 aa).

Residues M1–W89 lie on the Cytoplasmic side of the membrane. 2 positions are modified to phosphoserine: S16 and S23. A helical membrane pass occupies residues R90–I114. The Extracellular portion of the chain corresponds to A115 to G138. The segment at residues F139 to E150 is an intramembrane region (helical; Pore-forming). The pore-forming intramembrane region spans T151 to Y157. Residues T152–Y157 carry the Selectivity filter motif. The Extracellular portion of the chain corresponds to R158–E166. Residues G167 to C188 traverse the membrane as a helical segment. Residues M189–V423 lie on the Cytoplasmic side of the membrane. The interval N390–V423 is disordered. The PDZ-binding signature appears at E420–V423.

It belongs to the inward rectifier-type potassium channel (TC 1.A.2.1) family. KCNJ6 subfamily. In terms of assembly, associates with KCNJ3/GIRK1 or KCNJ5/GRIK4 to form a G-protein-activated heteromultimer pore-forming unit. The resulting inward current is much larger. Interacts (via PDZ-binding motif) with SNX27 (via PDZ domain); the interaction is required when endocytosed to prevent degradation in lysosomes and promote recycling to the plasma membrane.

It localises to the membrane. The catalysed reaction is K(+)(in) = K(+)(out). Activated by phosphatidylinositol 4,5 biphosphate (PtdIns(4,5)P2). Functionally, inward rectifier potassium channels are characterized by a greater tendency to allow potassium to flow into the cell rather than out of it. Their voltage dependence is regulated by the concentration of extracellular potassium; as external potassium is raised, the voltage range of the channel opening shifts to more positive voltages. The inward rectification is mainly due to the blockage of outward current by internal magnesium. This potassium channel may be involved in the regulation of insulin secretion by glucose and/or neurotransmitters acting through G-protein-coupled receptors. The protein is G protein-activated inward rectifier potassium channel 2 (KCNJ6) of Pongo abelii (Sumatran orangutan).